A 141-amino-acid chain; its full sequence is Large ribosomal subunit protein uL11 (141 aa).

It belongs to the universal ribosomal protein uL11 family. As to quaternary structure, part of the ribosomal stalk of the 50S ribosomal subunit. Interacts with L10 and the large rRNA to form the base of the stalk. L10 forms an elongated spine to which L12 dimers bind in a sequential fashion forming a multimeric L10(L12)X complex. In terms of processing, one or more lysine residues are methylated.

Functionally, forms part of the ribosomal stalk which helps the ribosome interact with GTP-bound translation factors. The chain is Large ribosomal subunit protein uL11 from Prochlorococcus marinus (strain SARG / CCMP1375 / SS120).